Consider the following 139-residue polypeptide: Large ribosomal subunit protein uL16 (139 aa).

Basic residues predominate over residues 1–16 (MLIPKRTKYRKQHRPV). Positions 1-22 (MLIPKRTKYRKQHRPVRSGMSK) are disordered.

The protein belongs to the universal ribosomal protein uL16 family. In terms of assembly, part of the 50S ribosomal subunit.

Binds 23S rRNA and is also seen to make contacts with the A and possibly P site tRNAs. In Bifidobacterium longum subsp. infantis (strain ATCC 15697 / DSM 20088 / JCM 1222 / NCTC 11817 / S12), this protein is Large ribosomal subunit protein uL16.